A 2207-amino-acid chain; its full sequence is MDMQVPSVCLLVPPPNPLAISLASKNSQYYEAILSVWNQLYINVKSMISWQYCLLDIGRINSLTMSMLSKMGPDESNNILRSLEMHFQEFKRHSQGSELFGAEDQKLIENQFAGAQQHFDKLVVDLPTYAARGEGSEYSAAVSVKMLNELNALRLKLDGAESSLISFLYIALGDDGLEECGQHISSTQAFQKNIQGLRGEFVSLRDGIQAELKDAGNSDKGRYLSGQLDIMNQRLLNLDNYFTTHLQRLDSVKSLLKDMMKAEDVVKVYEARLTEKETASSDPEEVQRYQKVLLSMRSDLEQKQDLLNSLVVDLNQMQKVNDQRDQGRYQCIINLTQYADHVHQLSDRWKRIHVQINNRLVDLDSYLPQLKRYMQSSSQLSGWIDETQKQIDSQHSVKMEDSAAYTQLLNQQKALNSDIKAKRELMETVHKDGETCISAIKNYELELATYSAGLETLLNIPIKRTVLQSPSSSIAEEVSSLNAHYLELLTRSSDYYKLLLASQKNMEELKIRNTRIELLEEELEQLRDAIKDQTANNASLQDALLQYQQELNNSQSHLLSLEEVKRTETMKCMATQESLDSSKDRLEELTEEVRRLKLQLEDMERKKKIVEERYTFLQEEHDETMRKKLKELEQASWAKMELEKTVSERNRELERLRKELEDEARRIKEAQTELAKVRQEHSTEIREVKQTYESQILVAQSSMQKLSQEKESDSAAMSLEFERLEGESSELKEQLKRLRISLSQEEAQRRILEEEVKRLTALNTEESRKRHELESQIQVMMSQKREGDNKMREVQESSSRTLQDKINEINRLTRNFEEERRLKRSLETDKRRLEGDLAVLKSKNETTNEELVQLRSSHRELSLIRVELEAHALEKGRSEQTIARLQARIQELQEELKRLEGELEKQRQVAEEEAGKRRRTESQLEKSSQAMREYTTTITTLRTSQEETNIGAKHADEKCKQLQEALDRASKENKVTSQNLAALKAEINTLKLQLTQEQGRVQDSNQRYEALHRSMEEKSCALNVSSGETERLQRLTETLTKDRQRVEEELRAVRLEHEELLKNKKRGDREMTEQITALQKQLDSSQRAGAEHDRLMRQLSREREKLQVEIENVQKQARETSSVIQTSQSQCSSLSQERDDLLKKITTMEQEIVRLKRLEDELARIKLSLESELRFKSQLQEENNKIKKDFTQWKTKCASHEEQLRQHASERSGLESQFSSVRTELERLRTQLREAEERYRLLLQNFEQERTEMQALRDSKQELLRLQQKPDGATKYTQTDQTDPSSLVFEGVRKNITAQQLQDCGVIDKVIFEQLMTGKRTVQDVSVDIRLNLKGTGAIAGLAAGPKGKMTFTEAKKQNLISDKSGNMLLEAQAATGYIIDPQANTKMTVEEACLNGVVDEADKKQLLIAEAACVGFRDPKTAKLLPVSQAMKKGIIDRETTLRLLQAQEAAGGILDPILSVYLPKDTAMDRDLVDEDLYQALNAKPDCYIDPDTDLRASYVTLKKQCKADLNTGLLLLPAPEKPITVQGLRSEVNVSDLVDAKLLEPSDMNHLREGKITSQEIEHRLRAYLRGSTCIAGIYDEAGECTLPIYQAMKNGLLRPGTTLELLEAQAASGFVIDPINNEYYTVEEACQKGLVGVEFKDKLLSAEKAVTGYKEPGTNKLISLFEAIERGLIEKGHGIRLLEAQIASGGIIDPKHSHRIDVDVAYQRGYFDQGMNQILKDEGDDTKGFFDPNTEDNLTYLELKSRCTIDKKTGLVLLPIHDKKKAQQKNSTRKRRVLIVDPDSNKEMTVREAYEKKLIDYETFLELSQQECEWEETTITAPDGSTSTAIMDMQTGIQYNLKELLAQGVIDQDVFNKYRSGGISVTELAGMITKKTKMLTNPVSSSSSSSLSSSSSSFTSQTTTKSQIVKTETIKSIESTSEYLQQDQSSANSSKHISSMSVKLSPLVESIEEQNPVGAIFDTEKLEKITVCDALKRGMIDSITAQRLLEAQACTGGIVSPDNGRRMSIQEATRVGVLDDEMANRIKPAQKAYIGFEDVKTKRKMSAAEAVKEKWLPYEAGQRFLEFQYLTGGLFDPELGCRRSLEEALQMGWLDMRAAQRLQDTRHHPKTLTCPKTKLRISYKEAMEACMNEENTGVRMLPAATVSSRGISSPYNLSNPGSASGSRSGSRRGSVDYSLSPSSSSRYSSFSYSRTSFSSRSLS.

Coiled-coil stretches lie at residues 506 to 916 (MEEL…EAGK), 952 to 1000 (AKHA…EQGR), and 1029 to 1063 (TERL…LLKN). A compositionally biased stretch (basic and acidic residues) spans 905–924 (KQRQVAEEEAGKRRRTESQL). A disordered region spans residues 905 to 933 (KQRQVAEEEAGKRRRTESQLEKSSQAMRE). Plectin repeat units follow at residues 1369-1406 (LLEA…DKKQ), 1407-1445 (LLIA…TLRL), 1446-1483 (LQAQ…YQAL), 1571-1609 (YLRG…TLEL), 1610-1647 (LEAQ…KDKL), 1685-1723 (LLEA…NQIL), 1783-1811 (IVDP…FLEL), 1992-2029 (LLEA…MANR), and 2068-2106 (FLEF…AQRL). The span at 2155 to 2164 (ISSPYNLSNP) shows a compositional bias: polar residues. The segment at 2155–2207 (ISSPYNLSNPGSASGSRSGSRRGSVDYSLSPSSSSRYSSFSYSRTSFSSRSLS) is disordered. Over residues 2165–2207 (GSASGSRSGSRRGSVDYSLSPSSSSRYSSFSYSRTSFSSRSLS) the composition is skewed to low complexity.

This sequence belongs to the plakin or cytolinker family.

It is found in the cell junction. The protein localises to the desmosome. Its subcellular location is the cell membrane. Involved in the organization of desmosome cell-cell junctions. Of particular importance in cell adhesion in the skin and during cardiac development. May also play a role in the regulation of Wnt, TGF-beta and Hippo signaling pathways. The sequence is that of Desmoplakin-B from Danio rerio (Zebrafish).